Consider the following 347-residue polypeptide: Fructose-1,6-bisphosphatase (347 aa).

AMP-binding positions include 19-23 (ILQEQ) and 44-48 (SGELS). D85 and E114 together coordinate Mg(2+). 127–128 (SY) contributes to the AMP binding site. D133, I135, and D136 together coordinate Mg(2+). Position 136-139 (136-139 (DGSS)) interacts with substrate. Residue K155 coordinates AMP. Residues 227-230 (NEGY), 258-263 (RYIGSM), Y279, and 288-290 (KLR) contribute to the substrate site. Residue E294 coordinates Mg(2+).

It belongs to the FBPase class 1 family. In terms of assembly, homotetramer. It depends on Mg(2+) as a cofactor.

The catalysed reaction is beta-D-fructose 1,6-bisphosphate + H2O = beta-D-fructose 6-phosphate + phosphate. Its pathway is carbohydrate biosynthesis; gluconeogenesis. With respect to regulation, subject to complex allosteric regulation. The enzyme can assume an active R-state, or an inactive T-state. Intermediate conformations may exist. AMP acts as allosteric inhibitor. AMP binding affects the turnover of bound substrate and not the affinity for substrate. This chain is Fructose-1,6-bisphosphatase (fbp1), found in Schizosaccharomyces pombe (strain 972 / ATCC 24843) (Fission yeast).